A 294-amino-acid chain; its full sequence is 4-hydroxy-tetrahydrodipicolinate synthase (294 aa).

Thr-47 is a pyruvate binding site. The active-site Proton donor/acceptor is Tyr-135. Lys-163 functions as the Schiff-base intermediate with substrate in the catalytic mechanism. Thr-205 serves as a coordination point for pyruvate.

This sequence belongs to the DapA family. In terms of assembly, homotetramer; dimer of dimers.

It is found in the cytoplasm. It catalyses the reaction L-aspartate 4-semialdehyde + pyruvate = (2S,4S)-4-hydroxy-2,3,4,5-tetrahydrodipicolinate + H2O + H(+). It participates in amino-acid biosynthesis; L-lysine biosynthesis via DAP pathway; (S)-tetrahydrodipicolinate from L-aspartate: step 3/4. Functionally, catalyzes the condensation of (S)-aspartate-beta-semialdehyde [(S)-ASA] and pyruvate to 4-hydroxy-tetrahydrodipicolinate (HTPA). This chain is 4-hydroxy-tetrahydrodipicolinate synthase, found in Rickettsia montanensis.